A 792-amino-acid chain; its full sequence is Kinesin-like protein KIF3C (792 aa).

The region spanning 10 to 363 (ALKVVARCRP…LRFANRAKNI (354 aa)) is the Kinesin motor domain. Residue 97-104 (GQTGTGKT) coordinates ATP. 3 disordered regions span residues 249-287 (GSER…RPKE), 397-418 (MLGK…APAG), and 749-792 (RPST…LDHE). Residues 257–268 (GPNTTGGTATQP) are compositionally biased toward low complexity. A compositionally biased stretch (gly residues) spans 269-282 (TGGGGGGGGGGGGG). Residues 374 to 627 (KDTLLREFQE…QNEQTRELKL (254 aa)) are a coiled coil. A compositionally biased stretch (basic residues) spans 397–412 (MLGKRLRRKSSRRKKA). Positions 628 to 792 (KYLIIENFIP…LRPTTVLDHE (165 aa)) are globular. Low complexity predominate over residues 773-792 (AHASLAASAALRPTTVLDHE).

The protein belongs to the TRAFAC class myosin-kinesin ATPase superfamily. Kinesin family. Kinesin II subfamily. In terms of assembly, heterodimer of KIF3A and KIF3C.

The protein localises to the cytoplasm. It localises to the cytoskeleton. Functionally, microtubule-based anterograde translocator for membranous organelles. This is Kinesin-like protein KIF3C (KIF3C) from Bos taurus (Bovine).